The sequence spans 147 residues: Monothiol glutaredoxin-S5 (147 aa).

Residues 49–146 (AAEVRRAVAE…PILKKAGALW (98 aa)) enclose the Glutaredoxin domain. Residue C69 participates in [2Fe-2S] cluster binding. Residues 144-147 (ALWL) carry the Responsive for interaction with TGA factors motif.

It belongs to the glutaredoxin family. CC-type subfamily.

The protein resides in the cytoplasm. The protein localises to the nucleus. Functionally, may only reduce GSH-thiol disulfides, but not protein disulfides. This Oryza sativa subsp. japonica (Rice) protein is Monothiol glutaredoxin-S5 (GRXS5).